The sequence spans 436 residues: tRNA-2-methylthio-N(6)-dimethylallyladenosine synthase (436 aa).

Residues 5-121 (RKLFIKTYGC…LPDMLERTEG (117 aa)) enclose the MTTase N-terminal domain. Cys-14, Cys-50, Cys-84, Cys-158, Cys-162, and Cys-165 together coordinate [4Fe-4S] cluster. The region spanning 144 to 373 (ALRGPTAFLT…LGEQQRAAQA (230 aa)) is the Radical SAM core domain. A TRAM domain is found at 373 to 435 (AAMVGRELGV…PNSLAGERIG (63 aa)).

It belongs to the methylthiotransferase family. MiaB subfamily. Monomer. [4Fe-4S] cluster is required as a cofactor.

It is found in the cytoplasm. The catalysed reaction is N(6)-dimethylallyladenosine(37) in tRNA + (sulfur carrier)-SH + AH2 + 2 S-adenosyl-L-methionine = 2-methylsulfanyl-N(6)-dimethylallyladenosine(37) in tRNA + (sulfur carrier)-H + 5'-deoxyadenosine + L-methionine + A + S-adenosyl-L-homocysteine + 2 H(+). In terms of biological role, catalyzes the methylthiolation of N6-(dimethylallyl)adenosine (i(6)A), leading to the formation of 2-methylthio-N6-(dimethylallyl)adenosine (ms(2)i(6)A) at position 37 in tRNAs that read codons beginning with uridine. This Cereibacter sphaeroides (strain ATCC 17025 / ATH 2.4.3) (Rhodobacter sphaeroides) protein is tRNA-2-methylthio-N(6)-dimethylallyladenosine synthase.